Consider the following 115-residue polypeptide: Large ribosomal subunit protein bL20c (115 aa).

This sequence belongs to the bacterial ribosomal protein bL20 family.

The protein resides in the plastid. It localises to the organellar chromatophore. Functionally, binds directly to 23S ribosomal RNA and is necessary for the in vitro assembly process of the 50S ribosomal subunit. It is not involved in the protein synthesizing functions of that subunit. The protein is Large ribosomal subunit protein bL20c of Paulinella chromatophora.